Consider the following 600-residue polypeptide: Translation initiation factor IF-2 (600 aa).

The region spanning 112–279 is the tr-type G domain; that stretch reads ERAPIITVMG…AINLQAEILE (168 aa). The interval 121–128 is G1; it reads GHVDHGKT. GTP is bound at residue 121–128; that stretch reads GHVDHGKT. The segment at 146-150 is G2; that stretch reads GITQH. The G3 stretch occupies residues 167–170; sequence DTPG. GTP-binding positions include 167-171 and 221-224; these read DTPGH and NKMD. Residues 221-224 are G4; that stretch reads NKMD. A G5 region spans residues 257–259; the sequence is SAL.

It belongs to the TRAFAC class translation factor GTPase superfamily. Classic translation factor GTPase family. IF-2 subfamily.

Its subcellular location is the cytoplasm. One of the essential components for the initiation of protein synthesis. Protects formylmethionyl-tRNA from spontaneous hydrolysis and promotes its binding to the 30S ribosomal subunits. Also involved in the hydrolysis of GTP during the formation of the 70S ribosomal complex. In Mycoplasma mobile (strain ATCC 43663 / 163K / NCTC 11711) (Mesomycoplasma mobile), this protein is Translation initiation factor IF-2.